Reading from the N-terminus, the 359-residue chain is UDP-3-O-acylglucosamine N-acyltransferase (359 aa).

His253 (proton acceptor) is an active-site residue.

The protein belongs to the transferase hexapeptide repeat family. LpxD subfamily. In terms of assembly, homotrimer.

The catalysed reaction is a UDP-3-O-[(3R)-3-hydroxyacyl]-alpha-D-glucosamine + a (3R)-hydroxyacyl-[ACP] = a UDP-2-N,3-O-bis[(3R)-3-hydroxyacyl]-alpha-D-glucosamine + holo-[ACP] + H(+). Its pathway is bacterial outer membrane biogenesis; LPS lipid A biosynthesis. Its function is as follows. Catalyzes the N-acylation of UDP-3-O-acylglucosamine using 3-hydroxyacyl-ACP as the acyl donor. Is involved in the biosynthesis of lipid A, a phosphorylated glycolipid that anchors the lipopolysaccharide to the outer membrane of the cell. The protein is UDP-3-O-acylglucosamine N-acyltransferase of Burkholderia lata (strain ATCC 17760 / DSM 23089 / LMG 22485 / NCIMB 9086 / R18194 / 383).